The sequence spans 365 residues: Eukaryotic translation initiation factor 3 subunit H (365 aa).

Positions 11–160 constitute an MPN domain; the sequence is VKVEALVVMK…LRAFRLSPKF (150 aa).

Belongs to the eIF-3 subunit H family. Component of the eukaryotic translation initiation factor 3 (eIF-3) complex.

The protein localises to the cytoplasm. Component of the eukaryotic translation initiation factor 3 (eIF-3) complex, which is involved in protein synthesis of a specialized repertoire of mRNAs and, together with other initiation factors, stimulates binding of mRNA and methionyl-tRNAi to the 40S ribosome. The eIF-3 complex specifically targets and initiates translation of a subset of mRNAs involved in cell proliferation. The chain is Eukaryotic translation initiation factor 3 subunit H from Aspergillus niger (strain ATCC MYA-4892 / CBS 513.88 / FGSC A1513).